The chain runs to 269 residues: Type II restriction enzyme SfiI (269 aa).

It carries out the reaction Endonucleolytic cleavage of DNA to give specific double-stranded fragments with terminal 5'-phosphates.. Its function is as follows. An F and P subtype restriction enzyme that recognizes the double-stranded sequence 5'-GGCCN(5)GGCC-3' and cleaves before N-9. The polypeptide is Type II restriction enzyme SfiI (sfiIR) (Streptomyces fimbriatus).